The sequence spans 439 residues: Histidine--tRNA ligase (439 aa).

Belongs to the class-II aminoacyl-tRNA synthetase family. As to quaternary structure, homodimer.

Its subcellular location is the cytoplasm. It carries out the reaction tRNA(His) + L-histidine + ATP = L-histidyl-tRNA(His) + AMP + diphosphate + H(+). The sequence is that of Histidine--tRNA ligase (hisS) from Leptospira interrogans serogroup Icterohaemorrhagiae serovar Lai (strain 56601).